A 596-amino-acid polypeptide reads, in one-letter code: Elongation factor 4 (596 aa).

One can recognise a tr-type G domain in the interval 2–183 (ENIRNFSIIA…AIIERIPAPS (182 aa)). GTP is bound by residues 14–19 (DHGKST) and 130–133 (NKID).

Belongs to the TRAFAC class translation factor GTPase superfamily. Classic translation factor GTPase family. LepA subfamily.

It is found in the cell inner membrane. The enzyme catalyses GTP + H2O = GDP + phosphate + H(+). Required for accurate and efficient protein synthesis under certain stress conditions. May act as a fidelity factor of the translation reaction, by catalyzing a one-codon backward translocation of tRNAs on improperly translocated ribosomes. Back-translocation proceeds from a post-translocation (POST) complex to a pre-translocation (PRE) complex, thus giving elongation factor G a second chance to translocate the tRNAs correctly. Binds to ribosomes in a GTP-dependent manner. This is Elongation factor 4 from Nitratiruptor sp. (strain SB155-2).